The chain runs to 475 residues: ATP synthase subunit beta, chloroplastic (475 aa).

Residue 155-162 (GGAGVGKT) participates in ATP binding.

The protein belongs to the ATPase alpha/beta chains family. F-type ATPases have 2 components, CF(1) - the catalytic core - and CF(0) - the membrane proton channel. CF(1) has five subunits: alpha(3), beta(3), gamma(1), delta(1), epsilon(1). CF(0) has four main subunits: a(1), b(1), b'(1) and c(9-12).

It is found in the plastid. Its subcellular location is the chloroplast thylakoid membrane. The catalysed reaction is ATP + H2O + 4 H(+)(in) = ADP + phosphate + 5 H(+)(out). Its function is as follows. Produces ATP from ADP in the presence of a proton gradient across the membrane. The catalytic sites are hosted primarily by the beta subunits. The chain is ATP synthase subunit beta, chloroplastic from Pyropia yezoensis (Susabi-nori).